A 396-amino-acid polypeptide reads, in one-letter code: Glycerate kinase (396 aa).

Belongs to the glycerate kinase type-2 family.

It is found in the cytoplasm. It carries out the reaction (R)-glycerate + ATP = (2R)-3-phosphoglycerate + ADP + H(+). The protein is Glycerate kinase (GLYCTK) of Macaca fascicularis (Crab-eating macaque).